Reading from the N-terminus, the 272-residue chain is Cerberus (272 aa).

Residues 1 to 17 form the signal peptide; sequence MHLLLVQLLVLLPLGKA. Disulfide bonds link Cys162–Cys209, Cys176–Cys223, Cys186–Cys239, and Cys190–Cys241. One can recognise a CTCK domain in the interval 162-246; the sequence is CRTVPFNQTI…EECQCMVKTE (85 aa). N-linked (GlcNAc...) asparagine glycans are attached at residues Asn168 and Asn222.

Belongs to the DAN family. In terms of assembly, forms monomers and predominantly dimers. In terms of processing, N-glycosylated.

The protein resides in the secreted. Cytokine that may play a role in anterior neural induction and somite formation during embryogenesis in part, through a BMP-inhibitory mechanism. Can regulate Nodal signaling during gastrulation as well as the formation and patterning of the primitive streak. This chain is Cerberus (Cer1), found in Mus musculus (Mouse).